Consider the following 306-residue polypeptide: Acetaldehyde dehydrogenase 2/3 (306 aa).

Cysteine 130 serves as the catalytic Acyl-thioester intermediate. NAD(+)-binding positions include 161-169 (SAGPGTRKN) and asparagine 272.

This sequence belongs to the acetaldehyde dehydrogenase family.

The catalysed reaction is acetaldehyde + NAD(+) + CoA = acetyl-CoA + NADH + H(+). The sequence is that of Acetaldehyde dehydrogenase 2/3 (mhpF) from Azoarcus sp. (strain BH72).